The primary structure comprises 393 residues: Transcription factor bHLH112 (393 aa).

Disordered regions lie at residues 248-277 (TRAQ…SPLP) and 332-356 (KQGA…NENH). The segment covering 254–265 (SLKRAKDNESAA) has biased composition (basic and acidic residues). Positions 270 to 319 (VTTPSPLPTFKVRKENLRDQITSLQQLVSPFGKTDTASVLQEAIEYIKFL) constitute a bHLH domain. The span at 332–347 (KQGASNQQQQQISGKS) shows a compositional bias: low complexity.

In terms of assembly, homodimer.

The protein resides in the nucleus. The protein is Transcription factor bHLH112 (BHLH112) of Arabidopsis thaliana (Mouse-ear cress).